Here is a 359-residue protein sequence, read N- to C-terminus: NADH-quinone oxidoreductase subunit H (359 aa).

The next 8 helical transmembrane spans lie at 16 to 36, 94 to 114, 129 to 149, 167 to 187, 208 to 228, 261 to 281, 296 to 316, and 331 to 351; these read IWPA…CVLL, GLFV…WAVI, LLFL…AGWA, VSYE…SASL, FLSW…ISGL, FFLA…ILFL, IPGW…FLWV, and LGWK…GAWM.

The protein belongs to the complex I subunit 1 family. As to quaternary structure, NDH-1 is composed of 14 different subunits. Subunits NuoA, H, J, K, L, M, N constitute the membrane sector of the complex.

The protein localises to the cell inner membrane. It catalyses the reaction a quinone + NADH + 5 H(+)(in) = a quinol + NAD(+) + 4 H(+)(out). Functionally, NDH-1 shuttles electrons from NADH, via FMN and iron-sulfur (Fe-S) centers, to quinones in the respiratory chain. The immediate electron acceptor for the enzyme in this species is believed to be ubiquinone. Couples the redox reaction to proton translocation (for every two electrons transferred, four hydrogen ions are translocated across the cytoplasmic membrane), and thus conserves the redox energy in a proton gradient. This subunit may bind ubiquinone. The protein is NADH-quinone oxidoreductase subunit H of Polaromonas sp. (strain JS666 / ATCC BAA-500).